A 313-amino-acid polypeptide reads, in one-letter code: Adhesin MafA 2/3 (313 aa).

A signal peptide spans 1–14 (MKTLLLLIPLVLTA). The N-palmitoyl cysteine moiety is linked to residue Cys15. The S-diacylglycerol cysteine moiety is linked to residue Cys15. Over residues 282–298 (GDTTAQNRPDFKQNNGK) the composition is skewed to polar residues. The segment at 282-313 (GDTTAQNRPDFKQNNGKNPDVGNEVIRRRKGG) is disordered.

Belongs to the MafA family.

It is found in the cell outer membrane. In Neisseria gonorrhoeae (strain ATCC 700825 / FA 1090), this protein is Adhesin MafA 2/3 (mafA2).